The chain runs to 869 residues: Rho GTPase-activating protein 27 (869 aa).

The region spanning 6–69 (EGDVYVLVEH…PAQYVRELPA (64 aa)) is the SH3 domain. A Phosphotyrosine modification is found at alanine 28. Positions 104-134 (GADGSSAEPRGRASSLCGPARQRTGGQRNSL) are disordered. Residues serine 155, serine 215, and serine 249 each carry the phosphoserine modification. Disordered stretches follow at residues 208-300 (RCPP…SGES) and 331-401 (ETEE…GWSC). The segment covering 209-220 (CPPRAESPKQVD) has biased composition (basic and acidic residues). Over residues 235–250 (RATSPRSAAAPPRLSP) the composition is skewed to low complexity. Residues 246-280 (PRLSPVWETHTDTGTGRPYYYNPDTGVTTWESPFE) form the WW 1 domain. Polar residues predominate over residues 283–294 (EGTTSPATSRAS). Residues 299 to 333 (ESLETEWGQYWDEESRRVFFYNPLTGETAWEDETE) enclose the WW 2 domain. Positions 345 to 356 (MQPSLSPRSPGQ) are enriched in polar residues. Serine 350 bears the Phosphoserine mark. Positions 414–447 (QFTQEQWVRLEDQHGKPYFYNPEDSSVQWELPQV) constitute a WW 3 domain. Disordered stretches follow at residues 449–477 (IPAP…KIKT) and 623–642 (EEDV…GLES). Phosphoserine occurs at positions 459 and 462. Position 464 is a phosphothreonine (threonine 464). Position 469 is a phosphoserine (serine 469). The PH domain maps to 477 to 593 (TLDKAGVLHR…WHKAIAEGIS (117 aa)). A phosphoserine mark is found at serine 632 and serine 636. Positions 677 to 866 (CALAQLCERE…LILHQCADIF (190 aa)) constitute a Rho-GAP domain.

Interacts with SH3KBP1/CIN85. Widely expressed. Highly expressed in kidney, lung, small intestine and thymus.

The protein resides in the cytoplasm. It localises to the membrane. Its function is as follows. Rho GTPase-activating protein which may be involved in clathrin-mediated endocytosis. GTPase activators for the Rho-type GTPases act by converting them to an inactive GDP-bound state. Has activity toward CDC42 and RAC1. The protein is Rho GTPase-activating protein 27 (Arhgap27) of Mus musculus (Mouse).